The following is a 209-amino-acid chain: Octanoyltransferase (209 aa).

The BPL/LPL catalytic domain maps to 29-209 (GSGDELVWML…KKSFVKIFGE (181 aa)). Substrate is bound by residues 68 to 75 (RGGKYTYH), 141 to 143 (AIG), and 154 to 156 (GIA). Cysteine 172 acts as the Acyl-thioester intermediate in catalysis.

Belongs to the LipB family.

The protein resides in the cytoplasm. The catalysed reaction is octanoyl-[ACP] + L-lysyl-[protein] = N(6)-octanoyl-L-lysyl-[protein] + holo-[ACP] + H(+). It participates in protein modification; protein lipoylation via endogenous pathway; protein N(6)-(lipoyl)lysine from octanoyl-[acyl-carrier-protein]: step 1/2. Catalyzes the transfer of endogenously produced octanoic acid from octanoyl-acyl-carrier-protein onto the lipoyl domains of lipoate-dependent enzymes. Lipoyl-ACP can also act as a substrate although octanoyl-ACP is likely to be the physiological substrate. In Neorickettsia sennetsu (strain ATCC VR-367 / Miyayama) (Ehrlichia sennetsu), this protein is Octanoyltransferase.